The sequence spans 140 residues: ATP synthase epsilon chain (140 aa).

It belongs to the ATPase epsilon chain family. F-type ATPases have 2 components, CF(1) - the catalytic core - and CF(0) - the membrane proton channel. CF(1) has five subunits: alpha(3), beta(3), gamma(1), delta(1), epsilon(1). CF(0) has three main subunits: a, b and c.

The protein resides in the cell inner membrane. Produces ATP from ADP in the presence of a proton gradient across the membrane. The protein is ATP synthase epsilon chain of Vibrio vulnificus (strain CMCP6).